Reading from the N-terminus, the 443-residue chain is Tubulin beta chain (443 aa).

Residues Q11, E69, S138, G142, T143, G144, N204, and N226 each contribute to the GTP site. E69 is a binding site for Mg(2+). Residues 421 to 443 (EYQQYQDASAEEEGEFGEEEEEN) are disordered. Positions 429–443 (SAEEEGEFGEEEEEN) are enriched in acidic residues.

It belongs to the tubulin family. In terms of assembly, dimer of alpha and beta chains. A typical microtubule is a hollow water-filled tube with an outer diameter of 25 nm and an inner diameter of 15 nM. Alpha-beta heterodimers associate head-to-tail to form protofilaments running lengthwise along the microtubule wall with the beta-tubulin subunit facing the microtubule plus end conferring a structural polarity. Microtubules usually have 13 protofilaments but different protofilament numbers can be found in some organisms and specialized cells. Mg(2+) is required as a cofactor.

It localises to the cytoplasm. It is found in the cytoskeleton. In terms of biological role, tubulin is the major constituent of microtubules, a cylinder consisting of laterally associated linear protofilaments composed of alpha- and beta-tubulin heterodimers. Microtubules grow by the addition of GTP-tubulin dimers to the microtubule end, where a stabilizing cap forms. Below the cap, tubulin dimers are in GDP-bound state, owing to GTPase activity of alpha-tubulin. This chain is Tubulin beta chain (TUBB1), found in Polytomella agilis (Quadriflagellate alga).